The following is a 347-amino-acid chain: UPF0284 protein M164_0030 (347 aa).

This sequence belongs to the UPF0284 family.

This chain is UPF0284 protein M164_0030, found in Saccharolobus islandicus (strain M.16.4 / Kamchatka #3) (Sulfolobus islandicus).